A 120-amino-acid polypeptide reads, in one-letter code: Glycine cleavage system H protein (120 aa).

In terms of domain architecture, Lipoyl-binding spans Val-17–Lys-99. Lys-58 is subject to N6-lipoyllysine.

This sequence belongs to the GcvH family. The glycine cleavage system is composed of four proteins: P, T, L and H. It depends on (R)-lipoate as a cofactor.

Its function is as follows. The glycine cleavage system catalyzes the degradation of glycine. The H protein shuttles the methylamine group of glycine from the P protein to the T protein. The chain is Glycine cleavage system H protein from Rhizobium leguminosarum bv. trifolii (strain WSM2304).